Reading from the N-terminus, the 436-residue chain is APO protein 1, chloroplastic (436 aa).

The N-terminal 47 residues, 1 to 47 (MLLVSPACRGVYLQTIDPKPIDFSARASYALCFQIPTSIPKRECLMR), are a transit peptide targeting the chloroplast. 2 APO domains span residues 155–240 (ACSE…EIPE) and 329–414 (ACGY…RVPQ).

It belongs to the APO family. In terms of tissue distribution, expressed at low level. Expressed at higher level in leaves. Expressed at lower level in roots, stems, siliques and flowers.

The protein resides in the plastid. It is found in the chloroplast. In terms of biological role, involved in the stable assembly of several 4Fe-4S cluster-containing complexes of chloroplasts. May participate in 4Fe-4S cofactor incorporation into psaA and/or psaB during translation. The polypeptide is APO protein 1, chloroplastic (APO1) (Arabidopsis thaliana (Mouse-ear cress)).